We begin with the raw amino-acid sequence, 224 residues long: Endonuclease NucS (224 aa).

It belongs to the NucS endonuclease family.

It is found in the cytoplasm. Functionally, cleaves both 3' and 5' ssDNA extremities of branched DNA structures. This Mycolicibacterium smegmatis (strain ATCC 700084 / mc(2)155) (Mycobacterium smegmatis) protein is Endonuclease NucS.